The chain runs to 105 residues: ATP-dependent Clp protease adapter protein ClpS (105 aa).

Belongs to the ClpS family. Binds to the N-terminal domain of the chaperone ClpA.

Functionally, involved in the modulation of the specificity of the ClpAP-mediated ATP-dependent protein degradation. The chain is ATP-dependent Clp protease adapter protein ClpS from Aeromonas salmonicida (strain A449).